The sequence spans 406 residues: DAZ-associated protein 1 (406 aa).

At Met1 the chain carries N-acetylmethionine. RRM domains lie at 10–97 (GKLF…RTRP) and 113–190 (NKIF…RAEP). Residues 74-117 (TLDGRNIDPKPCTPRGMQPERTRPKEGWQKGPRSDSSKSNKIFV) are disordered. Over residues 91–111 (QPERTRPKEGWQKGPRSDSSK) the composition is skewed to basic and acidic residues. At Lys150 the chain carries N6-acetyllysine. The disordered stretch occupies residues 186 to 406 (KRAEPRDSKN…NVQGFHPYRR (221 aa)). Residues 195 to 207 (NQAPGQPGASQWG) show a composition bias toward polar residues. Residues 247 to 262 (GPPPAGRGAPPPPPPF) are compositionally biased toward pro residues. Arg253 is modified (omega-N-methylarginine). Low complexity predominate over residues 280-294 (FPQGYGAPPQFSFGY). Residues 295–315 (GPPPPPPDQFAPPGVPPPPAT) are compositionally biased toward pro residues. Over residues 363–378 (SDPSQQPPSYGGPSVP) the composition is skewed to low complexity. Residues 379 to 392 (GSGGPPAGGSGFGR) show a composition bias toward gly residues.

As to quaternary structure, interacts with DAZ and DAZL. In terms of processing, acetylation at Lys-150 is predominantly observed in the nuclear fraction, and may regulate nucleocytoplasmic transport. Mainly expressed in testis. Expressed at much lower level in liver, heart and brain. Also expressed in ovary. Expressed throughout testes development, in both the prenatal and postnatal periods.

It is found in the cytoplasm. Its subcellular location is the nucleus. Its function is as follows. RNA-binding protein, which may be required during spermatogenesis. In Mus musculus (Mouse), this protein is DAZ-associated protein 1 (Dazap1).